Reading from the N-terminus, the 268-residue chain is Secreted RxLR effector protein 32 (268 aa).

Positions 1–21 (MRGAYYVAFALLVAASTRTAA) are cleaved as a signal peptide. The RxLR-dEER signature appears at 50–71 (RILRESPDPKDRLPVYASDEER). Positions 120–257 (PKLEIKKSKR…PTPESLGIGG (138 aa)) are disordered. The span at 148–161 (SNSKKSLVSSASAK) shows a compositional bias: low complexity. A compositionally biased stretch (basic and acidic residues) spans 212–224 (NLDKNKRPDEAKI).

Belongs to the RxLR effector family.

Its subcellular location is the secreted. The protein resides in the host cell. Secreted effector that completely suppresses the host cell death induced by cell death-inducing proteins. In Plasmopara viticola (Downy mildew of grapevine), this protein is Secreted RxLR effector protein 32.